Consider the following 145-residue polypeptide: Ribonuclease HI (145 aa).

In terms of domain architecture, RNase H type-1 spans 1 to 142; sequence MNQTVYLYTD…ADDLANRGAA (142 aa). Aspartate 10, glutamate 48, aspartate 70, and aspartate 134 together coordinate Mg(2+).

Belongs to the RNase H family. In terms of assembly, monomer. Requires Mg(2+) as cofactor.

It localises to the cytoplasm. The enzyme catalyses Endonucleolytic cleavage to 5'-phosphomonoester.. Functionally, endonuclease that specifically degrades the RNA of RNA-DNA hybrids. The chain is Ribonuclease HI from Neisseria meningitidis serogroup B (strain ATCC BAA-335 / MC58).